Here is a 137-residue protein sequence, read N- to C-terminus: Proline-rich protein 13 (137 aa).

2 disordered regions span residues 26–54 (PPPL…PCRP) and 94–137 (VGPG…SDSD). Residues 103–124 (KTRKKMKKAHKKSHKHHKHGKH) are compositionally biased toward basic residues. Positions 125–137 (SSSSSSSSSSDSD) are enriched in low complexity.

The protein resides in the nucleus. Its function is as follows. Negatively regulates TSP1 expression at the level of transcription. This down-regulation was shown to reduce taxane-induced apoptosis. The chain is Proline-rich protein 13 (Prr13) from Mus musculus (Mouse).